Reading from the N-terminus, the 161-residue chain is MAEPPPSYLHFVGPAKTRSSSKRHSFSSSAHPASHRLFPCQYCPRKFYTSQALGGHQNAHKRERAAARRNLGVLANSPPILDDNNTFLRPYPCFYQNPFQGSTSGNEPLQEQPTMMTMDGYDPFHPYPYVYPFALSGNNNDGGNGVMEEDEPLDLDLSLRL.

Residues 1–33 form a disordered region; that stretch reads MAEPPPSYLHFVGPAKTRSSSKRHSFSSSAHPA. The C2H2-type zinc-finger motif lies at 38–60; the sequence is FPCQYCPRKFYTSQALGGHQNAH. The interval 142-161 is disordered; sequence GGNGVMEEDEPLDLDLSLRL. The short motif at 155–159 is the EAR-like (transcriptional repression) element; it reads LDLSL.

As to expression, first expressed in developing carpel primordia, and later in stamens and ovules of flower buds.

It is found in the nucleus. Its function is as follows. May function as a transcriptional repressor of cellular proliferation that regulates floral determinacy and relative size of basal pattern elements along the proximo-distal axis of the developing gynoecium. The protein is Zinc finger protein KNUCKLES (KNU) of Arabidopsis thaliana (Mouse-ear cress).